The primary structure comprises 207 residues: Casparian strip membrane protein 3 (207 aa).

Residues Met-1–Gly-45 are Cytoplasmic-facing. A helical transmembrane segment spans residues Val-46–Ala-66. Residues Thr-67–Thr-95 are Extracellular-facing. A helical transmembrane segment spans residues Phe-96–Ile-116. Topologically, residues Val-117–Lys-128 are cytoplasmic. A helical transmembrane segment spans residues Leu-129–Ala-149. The Extracellular segment spans residues Ala-150–Gly-181. Residues Ala-182 to Val-202 traverse the membrane as a helical segment. The Cytoplasmic segment spans residues Ala-203–His-207.

The protein belongs to the Casparian strip membrane proteins (CASP) family. As to quaternary structure, homodimer and heterodimers.

It is found in the cell membrane. Regulates membrane-cell wall junctions and localized cell wall deposition. Required for establishment of the Casparian strip membrane domain (CSD) and the subsequent formation of Casparian strips, a cell wall modification of the root endodermis that determines an apoplastic barrier between the intraorganismal apoplasm and the extraorganismal apoplasm and prevents lateral diffusion. The polypeptide is Casparian strip membrane protein 3 (Erythranthe guttata (Yellow monkey flower)).